The sequence spans 219 residues: Thymidylate kinase (219 aa).

Residue 10-17 coordinates ATP; the sequence is GLEGAGKT.

Belongs to the thymidylate kinase family.

It catalyses the reaction dTMP + ATP = dTDP + ADP. In terms of biological role, phosphorylation of dTMP to form dTDP in both de novo and salvage pathways of dTTP synthesis. The protein is Thymidylate kinase of Pectobacterium carotovorum subsp. carotovorum (strain PC1).